A 281-amino-acid chain; its full sequence is Arylamine N-acetyltransferase (281 aa).

The active-site Acyl-thioester intermediate is cysteine 69. Catalysis depends on residues histidine 107 and aspartate 122. N6-acetyllysine is present on residues lysine 214 and lysine 281.

The protein belongs to the arylamine N-acetyltransferase family. Homodimer. Post-translationally, acetylated on Lys-214 and Lys-281. Deacetylated by CobB.

The protein localises to the cytoplasm. The catalysed reaction is an arylamine + acetyl-CoA = an N-acetylarylamine + CoA. The enzyme catalyses an N-hydroxyarylamine + acetyl-CoA = an N-acetoxyarylamine + CoA. Inhibited by salicylic acid, acetylsalicylic acid, 2,6-dichrolo-4-nitrophenol, N-ethylmaleimide and iodoacetamide. Functionally, catalyzes the acetyl-CoA-dependent N-acetylation of aromatic amines, and, probably, the O-acetylation of N-hydroxyarylamines. In vitro, catalyzes the N-acetylation of various arylamines such as aminobenzoic acid, aminophenol, aminotoluene, phenetidine, anisidine, aniline, isoniazid and 2-amino-fluorene. N-hydroxyarylamine O-acetyltransferase activity has not been assayed directly, however, NhoA activity is required for the mutagenicity of nitroaromatic compounds, suggesting that it also has O-acetyltransferase activity. The protein is Arylamine N-acetyltransferase (nhoA) of Escherichia coli (strain K12).